Consider the following 198-residue polypeptide: MAAKKPTGRRVDGWKAKSWYKVYSPDNVGKVYLGDTVADDPSKLMGRVMQAPLSELVNDYTKQNVKMKFAITNVAGDAAYTSFIGHELARDFIRSLVKRRTSRIDCVVNFVSKDGCKVRATVTCFTLTRADQSQQHEIRKILTDDVLTFGKENELGVFVNNIINGDLAKELFKKVKELHPVRRVEVIKTKVELPKSSA.

The protein belongs to the eukaryotic ribosomal protein eS1 family.

The chain is Small ribosomal subunit protein eS1 from Methanospirillum hungatei JF-1 (strain ATCC 27890 / DSM 864 / NBRC 100397 / JF-1).